Reading from the N-terminus, the 188-residue chain is Probable chemoreceptor glutamine deamidase CheD (188 aa).

Belongs to the CheD family.

The catalysed reaction is L-glutaminyl-[protein] + H2O = L-glutamyl-[protein] + NH4(+). In terms of biological role, probably deamidates glutamine residues to glutamate on methyl-accepting chemotaxis receptors (MCPs), playing an important role in chemotaxis. This Caulobacter sp. (strain K31) protein is Probable chemoreceptor glutamine deamidase CheD.